The chain runs to 548 residues: DNA-binding protein REPIN1 (548 aa).

Residues 1 to 47 (MLERRCRGPTAMGPAHPWLFSGPSQESSQPNRGLRYQGKSVAQPGGP) are disordered. The span at 22-31 (GPSQESSQPN) shows a compositional bias: polar residues. Phosphoserine is present on S27. K39 is subject to N6-acetyllysine. The segment at 53 to 75 (HRCAHCRKRFPGWVALWLHTRRC) adopts a C2H2-type 1; atypical zinc-finger fold. 2 consecutive C2H2-type zinc fingers follow at residues 81–103 (LPCH…LQVH) and 112–134 (FICH…LRAH). The segment at 141 to 163 (ITCPECNKRFWRQKQLRAHLRRC) adopts a C2H2-type 4; atypical zinc-finger fold. C2H2-type zinc fingers lie at residues 173–195 (FICG…KRVH), 232–254 (FQCA…RRVH), 260–282 (HQCP…RRIH), 288–310 (YPCT…SKIH), 356–378 (HSCT…QRQH), 384–406 (FTCT…SRVH), 412–434 (FACE…RRDH), 440–462 (FVCP…RRIH), 468–490 (YVCP…RRIH), 496–518 (YACP…RKSH), and 524–546 (FCCA…QKKH). K272 carries the N6-acetyllysine modification.

As to quaternary structure, homodimers and homomultimers. Found in a complex with RIP60 and RIP100. As to expression, expressed in the liver and in subcutaneous and visceral adipose tissue.

It localises to the nucleus. The protein resides in the cytoplasm. It is found in the cytosol. Its function is as follows. Sequence-specific double-stranded DNA-binding protein. Binds ATT-rich and T-rich DNA sequences and facilitates DNA bending. May regulate the expression of genes involved in cellular fatty acid import, including SCARB1/CD36, and genes involved in lipid droplet formation. May regulate the expression of LCN2, and thereby influence iron metabolism and apoptosis-related pathways. May regulate the expression of genes involved in glucose transport. In Rattus norvegicus (Rat), this protein is DNA-binding protein REPIN1 (Repin1).